The following is a 391-amino-acid chain: Phosphoglycerate kinase (391 aa).

Residues 21–23, Arg-36, 59–62, Arg-113, and Arg-146 contribute to the substrate site; these read DMN and HLGR. Residues Lys-197, Glu-319, and 345 to 348 each bind ATP; that span reads GGDT.

The protein belongs to the phosphoglycerate kinase family. As to quaternary structure, monomer.

The protein resides in the cytoplasm. It catalyses the reaction (2R)-3-phosphoglycerate + ATP = (2R)-3-phospho-glyceroyl phosphate + ADP. The protein operates within carbohydrate degradation; glycolysis; pyruvate from D-glyceraldehyde 3-phosphate: step 2/5. The protein is Phosphoglycerate kinase of Chromobacterium violaceum (strain ATCC 12472 / DSM 30191 / JCM 1249 / CCUG 213 / NBRC 12614 / NCIMB 9131 / NCTC 9757 / MK).